Reading from the N-terminus, the 505-residue chain is Methylmalonyl-CoA carboxyltransferase 5S subunit (505 aa).

The region spanning 14–276 (VGITELVLRD…TTNLDYDRLH (263 aa)) is the Pyruvate carboxyltransferase domain. Residues 22–26 (RDAHQ), A59, and K184 each bind substrate. D23 contacts Co(2+). Co(2+) is bound by residues K184, H215, and H217. N6-carboxylysine; partial is present on K184.

In terms of assembly, homodimer. Transcarboxylase is composed of three subunits: 1.3S, 5S, and 12S. The core of the enzyme is composed of six 12S subunits. On each side of the core there are three pairs of 5S subunits. Each 5S dimer is attached to the core by two 1.3S subunits. Thus the total number of chains is 30 (6 + 12 + 12). Co(2+) is required as a cofactor. Post-translationally, lys-184 is carboxylated in the free enzyme and helps to coordinate the cobalt ion. Lys-184 is partially carboxylated in the complex with pyruvate, but is not carboxylated in the oxaloacetate-bound form.

The enzyme catalyses (S)-methylmalonyl-CoA + pyruvate = propanoyl-CoA + oxaloacetate. In terms of biological role, the 5S subunit specifically catalyzes the transfer of the carboxyl group from biotin of the 1.3S subunit to pyruvate to form oxaloacetate and 1.3S biotin. This Propionibacterium freudenreichii subsp. shermanii protein is Methylmalonyl-CoA carboxyltransferase 5S subunit.